Reading from the N-terminus, the 92-residue chain is Small ribosomal subunit protein uS19c (92 aa).

The protein belongs to the universal ribosomal protein uS19 family.

The protein resides in the plastid. It is found in the chloroplast. Its function is as follows. Protein S19 forms a complex with S13 that binds strongly to the 16S ribosomal RNA. The polypeptide is Small ribosomal subunit protein uS19c (Cucumis sativus (Cucumber)).